The following is a 73-amino-acid chain: MMSSIAAPKLKEKVEKFLSGKKKMYINGSFVESASGKTFDTPNPATGERLATVYEGDAEDIDRAVKAAREAFD.

Belongs to the aldehyde dehydrogenase family.

It carries out the reaction an aldehyde + NAD(+) + H2O = a carboxylate + NADH + 2 H(+). It functions in the pathway alcohol metabolism; ethanol degradation; acetate from ethanol: step 2/2. This chain is Aldehyde dehydrogenase, found in Geobacillus stearothermophilus (Bacillus stearothermophilus).